We begin with the raw amino-acid sequence, 445 residues long: tRNA-2-methylthio-N(6)-dimethylallyladenosine synthase (445 aa).

In terms of domain architecture, MTTase N-terminal spans 3-124 (KKLYIKTYGC…LPELISKVVR (122 aa)). [4Fe-4S] cluster-binding residues include Cys12, Cys48, Cys87, Cys162, Cys166, and Cys169. The region spanning 148–380 (YPQGTSAFIS…QQELMAQQLA (233 aa)) is the Radical SAM core domain. The TRAM domain maps to 383 to 445 (TSCVGSTMKV…SLNSLTGEIL (63 aa)).

The protein belongs to the methylthiotransferase family. MiaB subfamily. As to quaternary structure, monomer. Requires [4Fe-4S] cluster as cofactor.

It localises to the cytoplasm. The catalysed reaction is N(6)-dimethylallyladenosine(37) in tRNA + (sulfur carrier)-SH + AH2 + 2 S-adenosyl-L-methionine = 2-methylsulfanyl-N(6)-dimethylallyladenosine(37) in tRNA + (sulfur carrier)-H + 5'-deoxyadenosine + L-methionine + A + S-adenosyl-L-homocysteine + 2 H(+). In terms of biological role, catalyzes the methylthiolation of N6-(dimethylallyl)adenosine (i(6)A), leading to the formation of 2-methylthio-N6-(dimethylallyl)adenosine (ms(2)i(6)A) at position 37 in tRNAs that read codons beginning with uridine. This Rickettsia rickettsii (strain Iowa) protein is tRNA-2-methylthio-N(6)-dimethylallyladenosine synthase.